The following is a 227-amino-acid chain: MAYPLQLGFQDAVSPIMEELLYFHDHTLMIVFLISSLVLYIITLMLTTKLTHTNTMNAQEVETVWTILPAIILILIALPSLRILYMMDEINNPSLTVKTMGHQWYWSYEYTDYEDLNFDSYMVPTSDLKPGDLRLLEVDNRVVLPMDVTVRMLISSEDVLHSWAVPSLGLKTDAIPGRLNQTTLMSTRPGLFYGQCSEICGSNHSFMPIVLELVPLQTFEKWTASLL.

Residues 1–14 (MAYPLQLGFQDAVS) lie on the Mitochondrial intermembrane side of the membrane. The chain crosses the membrane as a helical span at residues 15-45 (PIMEELLYFHDHTLMIVFLISSLVLYIITLM). The Mitochondrial matrix portion of the chain corresponds to 46-59 (LTTKLTHTNTMNAQ). A helical transmembrane segment spans residues 60 to 87 (EVETVWTILPAIILILIALPSLRILYMM). Residues 88–227 (DEINNPSLTV…TFEKWTASLL (140 aa)) lie on the Mitochondrial intermembrane side of the membrane. Cu cation contacts are provided by H161, C196, E198, C200, H204, and M207. A Mg(2+)-binding site is contributed by E198.

This sequence belongs to the cytochrome c oxidase subunit 2 family. In terms of assembly, component of the cytochrome c oxidase (complex IV, CIV), a multisubunit enzyme composed of 14 subunits. The complex is composed of a catalytic core of 3 subunits MT-CO1, MT-CO2 and MT-CO3, encoded in the mitochondrial DNA, and 11 supernumerary subunits COX4I, COX5A, COX5B, COX6A, COX6B, COX6C, COX7A, COX7B, COX7C, COX8 and NDUFA4, which are encoded in the nuclear genome. The complex exists as a monomer or a dimer and forms supercomplexes (SCs) in the inner mitochondrial membrane with NADH-ubiquinone oxidoreductase (complex I, CI) and ubiquinol-cytochrome c oxidoreductase (cytochrome b-c1 complex, complex III, CIII), resulting in different assemblies (supercomplex SCI(1)III(2)IV(1) and megacomplex MCI(2)III(2)IV(2)). Found in a complex with TMEM177, COA6, COX18, COX20, SCO1 and SCO2. Interacts with TMEM177 in a COX20-dependent manner. Interacts with COX20. Interacts with COX16. Cu cation is required as a cofactor.

It localises to the mitochondrion inner membrane. It catalyses the reaction 4 Fe(II)-[cytochrome c] + O2 + 8 H(+)(in) = 4 Fe(III)-[cytochrome c] + 2 H2O + 4 H(+)(out). Functionally, component of the cytochrome c oxidase, the last enzyme in the mitochondrial electron transport chain which drives oxidative phosphorylation. The respiratory chain contains 3 multisubunit complexes succinate dehydrogenase (complex II, CII), ubiquinol-cytochrome c oxidoreductase (cytochrome b-c1 complex, complex III, CIII) and cytochrome c oxidase (complex IV, CIV), that cooperate to transfer electrons derived from NADH and succinate to molecular oxygen, creating an electrochemical gradient over the inner membrane that drives transmembrane transport and the ATP synthase. Cytochrome c oxidase is the component of the respiratory chain that catalyzes the reduction of oxygen to water. Electrons originating from reduced cytochrome c in the intermembrane space (IMS) are transferred via the dinuclear copper A center (CU(A)) of subunit 2 and heme A of subunit 1 to the active site in subunit 1, a binuclear center (BNC) formed by heme A3 and copper B (CU(B)). The BNC reduces molecular oxygen to 2 water molecules using 4 electrons from cytochrome c in the IMS and 4 protons from the mitochondrial matrix. In Hippopotamus amphibius (Hippopotamus), this protein is Cytochrome c oxidase subunit 2 (MT-CO2).